The primary structure comprises 530 residues: Cation transporter HKT2;1 (530 aa).

Over 1-40 (MTSIYHDFIHNKLQSFGRIGRYFVNFVVLAHRFIALHIHP) the chain is Cytoplasmic. The next 2 membrane-spanning stretches (helical) occupy residues 41 to 61 (FWIQ…LLMF) and 102 to 122 (IVVI…FLGL). Over 123–186 (MLRLNHKHNP…DLKRSKRLRW (64 aa)) the chain is Cytoplasmic. The next 2 helical transmembrane spans lie at 187–207 (FLGF…FLLV) and 260–280 (GLLL…PLFL). Over 281–317 (RLLIWFLGKVTKLRELKLMIKNPEELQYDYLLPKLPT) the chain is Cytoplasmic. Helical transmembrane passes span 318–338 (AFLA…FGAV) and 372–392 (IDCS…MYLP). Over 393-418 (PSTTFALSNGDEKTANKKAKRKLGLV) the chain is Cytoplasmic. 2 consecutive transmembrane segments (helical) span residues 419 to 439 (VQNL…VAFI) and 494 to 514 (SLSG…MLYG). Residues 515–530 (RLKAFTKGTGEYWRLW) lie on the Cytoplasmic side of the membrane.

This sequence belongs to the TrkH potassium transport family. HKT (TC 2.A.38.3) subfamily. In terms of tissue distribution, expressed in epidermis and vascular tissue of endodermis in roots, and in cells surrounding the vasculature in leaves.

It localises to the membrane. It carries out the reaction Na(+)(in) = Na(+)(out). In terms of biological role, seems to be involved in regulation of potassium-sodium homeostasis. Seems to act as a high-affinity sodium transporter, which mediates increased sodium uptake in roots under potassium deficiency and contributes to sodium accumulation and salt toxicity. Involved in nutritional sodium uptake and distribution in potassium-starved roots to allow plant growth. May also act as a potassium transporter. Functions as a sodium-potassium cotransporter. The protein is Cation transporter HKT2;1 of Oryza sativa subsp. indica (Rice).